The following is a 29-amino-acid chain: Cyclotide vibi-A (29 aa).

The cyclopeptide (Gly-Asn) cross-link spans 1-29 (GLPVCGETCFGGTCNTPGCSCSYPICTRN). 3 disulfide bridges follow: C5–C19, C9–C21, and C14–C26.

Post-translationally, this is a cyclic peptide.

Probably participates in a plant defense mechanism. The polypeptide is Cyclotide vibi-A (Viola biflora (Yellow wood violet)).